A 131-amino-acid chain; its full sequence is Hydrophilin PGA14 (131 aa).

Residues 1-18 (MKFTTVATVFAISSLAAA) form the signal peptide. Composition is skewed to basic and acidic residues over residues 42-59 (YGRF…ETGT) and 79-96 (KESD…RDSK). Residues 42–110 (YGRFDKTSRS…NSTTSSGNNG (69 aa)) form a disordered region. Asn-97 and Asn-101 each carry an N-linked (GlcNAc...) asparagine glycan. Over residues 97 to 110 (NASSNSTTSSGNNG) the composition is skewed to low complexity. Ser-105 is lipidated: GPI-anchor amidated serine. Positions 106 to 131 (SGNNGVATGVSLGLAGVLAVGAALVI) are cleaved as a propeptide — removed in mature form.

It belongs to the PGA14 family. In terms of processing, the GPI-anchor is attached to the protein in the endoplasmic reticulum and serves to target the protein to the cell surface. There, the glucosamine-inositol phospholipid moiety is cleaved off and the GPI-modified mannoprotein is covalently attached via its lipidless GPI glycan remnant to the 1,6-beta-glucan of the outer cell wall layer.

It is found in the secreted. Its subcellular location is the cell wall. It localises to the membrane. Functionally, hydrophilin which is essential to overcome the simple stress of the desiccation-rehydration process. The chain is Hydrophilin PGA14 (PGA14) from Candida albicans (strain SC5314 / ATCC MYA-2876) (Yeast).